Reading from the N-terminus, the 745-residue chain is Bacteriophage N4 adsorption protein B (745 aa).

3 consecutive transmembrane segments (helical) span residues 8–28 (FATW…IMFI), 362–382 (ISNF…LLLA), and 393–413 (FLSI…NFGL).

It is found in the cell inner membrane. In terms of biological role, required for bacteriophage N4 adsorption. May be a component of the phage receptor. This chain is Bacteriophage N4 adsorption protein B (nfrB), found in Escherichia coli O157:H7.